Reading from the N-terminus, the 713-residue chain is MSVLIDEKSHRSSGSTRSRIVVTVVGVLLMVSGLAVMLGHQSGSANEALGMEYEKPSVEVLDLEATEVEQLTKLGLSPKPKLKIVKGGDEQVLHGRFLHITDMHPDKYYKTGADVGSLCHSGKGSAGKYGDAVLGCDSPMVLMEDTLKWVKENLKDKIDFVVWTGDNVRHDNDRRYPRTESNIFDMNQRVSELMYETFKEENPRGGRPRQLKIPLVPSLGNNDVFPHNLFSPGPTLQTRELFKIWHDFVPAAQLHIFNRGAYFFKEIIPNELAVLSINTLYLFQSNPLVDNCDRKKDPGHKLFEWLGYTLKEMRARNMKVWLSGHVPPNEKNYDISCLRKYIVWMHEYRDVIIGGLYGHMNIDHFIPLDSKEAYKSIKNKFGKLGFDYELSFENDLYVSDDDDNSDSDSDDDDEDTSLEESYSNFNSPILKDGFEDSVNFKNMDDIRIQGGVPNGKVGYMENVRKEYYANVKGKKKSGYVSERYSIAHVTASVVPTFNSGLRVWEYNITGLQNLLTSDNQPRFAPWNEFFEGLEKLMETQVEADYDDEFITFGQQVEIFKNDNTFPPKMPKSKSLGPAYIPQAFTPERYVQYYADLANINRGEKEFSYEFEYATDDKVYDMDSLTVDDWISLARRLGKPVKEKKNKSNKKSKKKKKNKDKRLLENSEPLKQDGSKDSRLEQDRVQQSARLENLWQHYLKYSFVSSEYENMGMG.

The Cytoplasmic portion of the chain corresponds to Met-1–Arg-19. The helical; Signal-anchor for type II membrane protein transmembrane segment at Ile-20–His-40 threads the bilayer. Topologically, residues Gln-41–Gly-713 are vacuolar. Acidic residues predominate over residues Ser-399–Leu-418. Positions Ser-399–Leu-430 are disordered. 2 N-linked (GlcNAc...) asparagine glycosylation sites follow: Asn-507 and Asn-645. A compositionally biased stretch (basic residues) spans Val-640–Asp-659. Residues Val-640–Val-684 form a disordered region. The segment covering Lys-660 to Arg-683 has biased composition (basic and acidic residues).

Belongs to the endopolyphosphatase PPN1 family. The cofactor is a divalent metal cation. Processing by proteases in the vacuole may be required for activation.

It is found in the vacuole membrane. It carries out the reaction [phosphate](n+1) + n H2O = (n+1) phosphate + n H(+). Its function is as follows. Catalyzes the hydrolysis of inorganic polyphosphate (polyP) chains of many hundreds of phosphate residues into shorter lengths. This is Endopolyphosphatase (PPN1) from Debaryomyces hansenii (strain ATCC 36239 / CBS 767 / BCRC 21394 / JCM 1990 / NBRC 0083 / IGC 2968) (Yeast).